Consider the following 1462-residue polypeptide: Copper-transporting ATPase 2 (1462 aa).

Residues 1 to 23 (MDPRKNLASVGTMPEQERQVTAK) are disordered. At 1 to 655 (MDPRKNLASV…KTEIKQWKKS (655 aa)) the chain is on the cytoplasmic side. HMA domains follow at residues 68–134 (ATDV…FEAS), 153–219 (AVVK…FEAA), 267–333 (ATLP…PGHF), and 361–427 (RTAV…FEVS). Cu(+) contacts are provided by Cys79, Cys82, Cys164, Cys167, Cys278, and Cys281. A disordered region spans residues 333–361 (FKVSLPDGVEENEPQSGSSQRHQEQGPGR). Cys372 serves as a coordination point for Cu(+). The tract at residues 460–487 (KMAPDTRGLPTHQGPGHSSETPSSPGAT) is disordered. A compositionally biased stretch (polar residues) spans 475 to 487 (GHSSETPSSPGAT). Ser478 and Ser483 each carry phosphoserine. HMA domains follow at residues 490–556 (QKCF…FEAS) and 566–632 (GDIE…FHAS). Cys501, Cys504, Cys577, and Cys580 together coordinate Cu(+). A helical membrane pass occupies residues 656 to 677 (FLCSLVFGIPVMGLMVYMLIPS). Over 678-699 (STPQETMVLDHNIIPGLSVLNL) the chain is Extracellular. The chain crosses the membrane as a helical span at residues 700-719 (IFFILCTFVQFLGGWYFYVQ). At 720–726 (AYKSLRH) the chain is on the cytoplasmic side. A helical transmembrane segment spans residues 727-747 (RSANMDVLIVLATTIAYAYSL). The Extracellular portion of the chain corresponds to 748–766 (VILVVAVAEKAEKSPVTFF). A helical transmembrane segment spans residues 767–787 (DTPPMLFVFIALGRWLEHVAK). The Cytoplasmic segment spans residues 788–921 (SKTSEALAKL…KAPIQQLADR (134 aa)). Residues 922–944 (FSGYFVPFIIIISTLTLVVWIVI) traverse the membrane as a helical segment. The Extracellular portion of the chain corresponds to 945–974 (GFVDFGVVQKYFPSPSKHISQTEVIIRFAF). Residues 975 to 996 (QTSITVLCIACPCSLGLATPTA) traverse the membrane as a helical segment. The Cytoplasmic portion of the chain corresponds to 997-1319 (VMVGTGVAAQ…LSKRTVRRIR (323 aa)). The active-site 4-aspartylphosphate intermediate is Asp1029. Positions 1264 and 1268 each coordinate Mg(2+). A helical transmembrane segment spans residues 1320-1337 (VNLVLALIYNMVGIPIAA). Residues 1338–1348 (GVFMPIGIVLQ) lie on the Extracellular side of the membrane. A helical membrane pass occupies residues 1349 to 1368 (PWMGSAAMAASSVSVVLSSL). Residues 1369–1462 (QLKCYRKPDL…LSDRDEEQCI (94 aa)) are Cytoplasmic-facing. Phosphoserine is present on residues Ser1395 and Ser1454.

It belongs to the cation transport ATPase (P-type) (TC 3.A.3) family. Type IB subfamily. In terms of assembly, monomer. Interacts with COMMD1/MURR1. Interacts with DCTN4, in a copper-dependent manner. Interacts with ATOX1. Interacts (via C-terminus) with ZBTB16/PLZF. Detected in liver and kidney.

It localises to the golgi apparatus. The protein resides in the trans-Golgi network membrane. The protein localises to the late endosome. It carries out the reaction Cu(+)(in) + ATP + H2O = Cu(+)(out) + ADP + phosphate + H(+). Functionally, copper ion transmembrane transporter involved in the export of copper out of the cells, such as the efflux of hepatic copper into the bile. The polypeptide is Copper-transporting ATPase 2 (Atp7b) (Mus musculus (Mouse)).